The following is a 299-amino-acid chain: Polyamine aminopropyltransferase (299 aa).

The 247-residue stretch at 6-252 (IVLLFALLCT…SLPNQQALQQ (247 aa)) folds into the PABS domain. Residues Gln-36, Glu-120, and 147–148 (DA) each bind S-methyl-5'-thioadenosine. Asp-168 functions as the Proton acceptor in the catalytic mechanism.

The protein belongs to the spermidine/spermine synthase family. As to quaternary structure, homodimer or homotetramer.

The protein resides in the cytoplasm. The enzyme catalyses S-adenosyl 3-(methylsulfanyl)propylamine + putrescine = S-methyl-5'-thioadenosine + spermidine + H(+). It participates in amine and polyamine biosynthesis; spermidine biosynthesis; spermidine from putrescine: step 1/1. Catalyzes the irreversible transfer of a propylamine group from the amino donor S-adenosylmethioninamine (decarboxy-AdoMet) to putrescine (1,4-diaminobutane) to yield spermidine. This chain is Polyamine aminopropyltransferase, found in Vibrio vulnificus (strain CMCP6).